We begin with the raw amino-acid sequence, 314 residues long: Olfactory receptor 1E16 (314 aa).

The Extracellular segment spans residues 1–29 (MTERNKTVISQFLLLGLPIPPEHQQLFYA). A glycan (N-linked (GlcNAc...) asparagine) is linked at N5. A helical membrane pass occupies residues 30–50 (LFLVMYLTTVLGNLIIIILII). Residues 51 to 57 (LDSHLHT) are Cytoplasmic-facing. The chain crosses the membrane as a helical span at residues 58–78 (PMYLFLSNLSFSDLCFSSVTM). Topologically, residues 79-97 (PKLLQNMQSQVPSIPYAGC) are extracellular. A disulfide bond links C97 and C179. Residues 98-118 (LAQIYFFLFFGDLGNFLLVAM) traverse the membrane as a helical segment. The Cytoplasmic portion of the chain corresponds to 119–143 (AYDRYVAICYPLHYTTIMSPRLCVS). A helical membrane pass occupies residues 144 to 164 (LVVLSWVLTTFHAMLHTLLMA). Residues 165–196 (RLSFCEDNVIPHYFCDMSALLKLACSDTRVNE) lie on the Extracellular side of the membrane. A helical transmembrane segment spans residues 197–217 (VVIFIVASIFLVLPFALITMS). Over 218 to 239 (YVRIVSSILKVPSSQGIYKAFS) the chain is Cytoplasmic. The chain crosses the membrane as a helical span at residues 240-260 (TCGSHLSVVSLFYGTVIGLYL). Over 261–271 (SPSSNNSTVKD) the chain is Extracellular. 2 N-linked (GlcNAc...) asparagine glycosylation sites follow: N265 and N266. A helical transmembrane segment spans residues 272 to 292 (TVMSLMYTVVTPMLNPFIYSL). At 293–314 (RNRDIKGALERVFCKRKIQLNL) the chain is on the cytoplasmic side.

Belongs to the G-protein coupled receptor 1 family. In terms of tissue distribution, olfactory epithelium.

Its subcellular location is the cell membrane. In terms of biological role, odorant receptor. Activated by a lily-derived aldehyde as well as other odorants. May signal through an inositol 1,4,5-trisphosphate (IP3) second messenger system. The sequence is that of Olfactory receptor 1E16 from Mus musculus (Mouse).